We begin with the raw amino-acid sequence, 448 residues long: Trigger factor (448 aa).

The PPIase FKBP-type domain maps to 162–243 (GDFVQIDLNA…VRTVKEKELP (82 aa)).

The protein belongs to the FKBP-type PPIase family. Tig subfamily.

The protein resides in the cytoplasm. The enzyme catalyses [protein]-peptidylproline (omega=180) = [protein]-peptidylproline (omega=0). In terms of biological role, involved in protein export. Acts as a chaperone by maintaining the newly synthesized protein in an open conformation. Functions as a peptidyl-prolyl cis-trans isomerase. The sequence is that of Trigger factor from Salinispora arenicola (strain CNS-205).